Consider the following 548-residue polypeptide: MRSDITKSGPERAPHRALLKAMGITDDEIKRPFIGVANSANEFVPGHIHLDRIAEAVKAGIRIAGGVPFEFQTIGVCDGIAMGHGGMRYSLPSREIIEDSIEIMAQAHQLDGLVLIPTCDKIVPGHLMAAGRLDLPTIVVTGGPMLPGFACDRELDLINVFEEWQKGGESLSILEDLACPGAGSCAGLFTANSMACMAEALGLSLPGCATAHAVDAKKMRIAKLSGMMIVELVKRGLTARKIVSRESFENAVRVDMAIGGSTNTALHLPAIAAEFDIDLELDVFDRLSRETPHLVNLRPGGPHHMLDLDRAGGVQAVMHRLSSKLDLSVLTVTGKTLGAVLAEFKPVNPKANAEVIATLERPVHPEGGIAILKGSLAPEGSVVKQTAVSKKMLVHKGPAVVYDSEEESMKGILSGEVKAGDVVVIRYEGPKGGPGMRETLAPTSAIAGAGLSESVALITDGRFSGGTRGPCIGHVSPEAAVGGPIALVENGDMISIDIPNRRLDLLVDEGVLERRRASWRPPEPRVRGGVLDRYRKSVTSASKGGVLR.

Asp-78 lines the Mg(2+) pocket. [2Fe-2S] cluster is bound at residue Cys-119. Mg(2+) is bound by residues Asp-120 and Lys-121. Lys-121 carries the post-translational modification N6-carboxylysine. Cys-185 contacts [2Fe-2S] cluster. Residue Glu-438 participates in Mg(2+) binding. Residue Ser-464 is the Proton acceptor of the active site.

The protein belongs to the IlvD/Edd family. In terms of assembly, homodimer. Requires [2Fe-2S] cluster as cofactor. The cofactor is Mg(2+).

The enzyme catalyses (2R)-2,3-dihydroxy-3-methylbutanoate = 3-methyl-2-oxobutanoate + H2O. It carries out the reaction (2R,3R)-2,3-dihydroxy-3-methylpentanoate = (S)-3-methyl-2-oxopentanoate + H2O. It participates in amino-acid biosynthesis; L-isoleucine biosynthesis; L-isoleucine from 2-oxobutanoate: step 3/4. The protein operates within amino-acid biosynthesis; L-valine biosynthesis; L-valine from pyruvate: step 3/4. In terms of biological role, functions in the biosynthesis of branched-chain amino acids. Catalyzes the dehydration of (2R,3R)-2,3-dihydroxy-3-methylpentanoate (2,3-dihydroxy-3-methylvalerate) into 2-oxo-3-methylpentanoate (2-oxo-3-methylvalerate) and of (2R)-2,3-dihydroxy-3-methylbutanoate (2,3-dihydroxyisovalerate) into 2-oxo-3-methylbutanoate (2-oxoisovalerate), the penultimate precursor to L-isoleucine and L-valine, respectively. This is Dihydroxy-acid dehydratase from Methanothrix thermoacetophila (strain DSM 6194 / JCM 14653 / NBRC 101360 / PT) (Methanosaeta thermophila).